Reading from the N-terminus, the 942-residue chain is Valine--tRNA ligase (942 aa).

The 'HIGH' region signature appears at 43 to 53; it reads PNVTGTLHMGH. Positions 551–555 match the 'KMSKS' region motif; the sequence is KMSKS. An ATP-binding site is contributed by Lys-554. The stretch at 876–942 forms a coiled coil; sequence EGLVDLDAER…AGLREQRAKL (67 aa).

It belongs to the class-I aminoacyl-tRNA synthetase family. ValS type 1 subfamily. As to quaternary structure, monomer.

Its subcellular location is the cytoplasm. The catalysed reaction is tRNA(Val) + L-valine + ATP = L-valyl-tRNA(Val) + AMP + diphosphate. Catalyzes the attachment of valine to tRNA(Val). As ValRS can inadvertently accommodate and process structurally similar amino acids such as threonine, to avoid such errors, it has a 'posttransfer' editing activity that hydrolyzes mischarged Thr-tRNA(Val) in a tRNA-dependent manner. In Stenotrophomonas maltophilia (strain R551-3), this protein is Valine--tRNA ligase.